The following is a 596-amino-acid chain: Endoribonuclease ZC3H12A (596 aa).

Disordered stretches follow at residues 1-48 (MSDP…TSEL) and 97-134 (QALTAPSPQPPLVPRGGSTPKPSTLEPSLPEEDREGSD). A compositionally biased stretch (polar residues) spans 10–19 (VQESNPTMSL). The ubiquitin association domain stretch occupies residues 42–87 (EAPTSELQMKVDFFRKLGYSSSEIHSVLQKLGVQADTNTVLGELVK). The necessary for interaction with TANK stretch occupies residues 81 to 150 (VLGELVKHGS…DGSNVAMSHG (70 aa)). Residues 112-281 (GGSTPKPSTL…DKFMPPDDPL (170 aa)) are RNase. Residues 135 to 290 (LRPVVIDGSN…LGRHGPSLDN (156 aa)) form the RNase NYN domain. The RNA binding stretch occupies residues 214 to 220 (RRVGGKR). D226 is a Mg(2+) binding site. Disordered regions lie at residues 278 to 306 (DDPLGRHGPSLDNFLRKKPLPSEHRKQPC) and 340 to 417 (NALL…PTEW). The C3H1-type zinc finger occupies 301 to 324 (HRKQPCPYGKKCTYGIKCRFFHPE). Positions 301 to 454 (HRKQPCPYGK…SELWGVRGGS (154 aa)) are necessary for interaction with ZC3H12D. S344 carries the post-translational modification Phosphoserine. The segment covering 356–368 (QRPSPASQSSSVS) has biased composition (low complexity). A phosphoserine mark is found at S435 and S439. The tract at residues 511–543 (YWSEPYPLPPPTPVLQEPQRPSPGAGGGPWGRV) is disordered. Residues 524 to 533 (VLQEPQRPSP) are compositionally biased toward low complexity.

It belongs to the ZC3H12 family. Oligomer. Found in a deubiquitination complex with TANK, USP10 and ZC3H12A; this complex inhibits genotoxic stress- or interleukin-1-beta-mediated NF-kappaB activation by promoting IKBKG or TRAF6 deubiquitination. Interacts with IKBKG; this interaction increases in response to DNA damage. Interacts with TANK; this interaction increases in response to DNA damage and serves as a bridge to anchor both TANK and USP10 into a deubiquitinating complex. Interacts with TRAF6; this interaction increases in response to DNA damage and is stimulated by TANK. Interacts with USP10; this interaction increases in response to DNA damage and serves as a bridge to anchor both TANK and USP10 into a deubiquitinating complex. Interacts with ZC3H12D. Interacts with TNRC6A. Interacts with IKBKB/IKKB. Interacts with IKBKB/IKKB. Interacts with IKBKB/IKKB. Interacts with BTRC; the interaction occurs when ZC3H12A is phosphorylated in a IKBKB/IKKB-dependent manner. Interacts with IRAK1; this interaction increases the interaction between ZC3H12A and IKBKB/IKKB. Interacts with UPF1; this interaction occurs in a mRNA translationally active- and termination-dependent manner and is essential for ZC3H12A-mediated degradation of target mRNAs. Associates with ribosomes. Interacts with ubiquitin. It depends on Mg(2+) as a cofactor. Proteolytically cleaved between Arg-111 and Arg-214 by MALT1 in activated T-cells; cleavage at Arg-111 is critical for promoting ZC3H12A degradation in response to T-cell receptor (TCR) stimulation, and hence is necessary for prolonging the stability of a set of mRNAs controlling T-cell activation and Th17 cell differentiation. Post-translationally, phosphorylated by IRAK1; phosphorylation is necessary for subsequent phosphorylation by the I-kappa-B-kinase (IKK) complex. Phosphorylated by I-kappa-B-kinases (IKKs) at Ser-435 and Ser-439 upon lipopolysaccharide (LPS) or IL1B stimulation in macrophages through the MyD88-dependent signaling pathway; these phosphorylations promote rapid ubiquitin proteasome-mediated degradation of ZC3H12A in macrophages and hence allows its target mRNAs, such as IL6, to escape from degradation and accumulate during the inflammatory response. In terms of processing, ubiquitinated; ubiquitination is induced in response to interleukin IL1 receptor stimuli in a IKBKB/IKKB and IRAK1-dependent manner, leading to proteasome-mediated degradation. Expressed in CD4(+) helper T-cells (at protein level). Highly expressed in macrophages. Expressed in lung, lymph nodes, spleen and thymus. Expressed weakly in heart. Expressed weakly in cardiomyocytes (at protein level). Expressed in spleen, lung, intestine, brown adipose tissue and thymus. Weakly expressed in the heart. Weakly expressed in cardiomyocytes.

It localises to the nucleus. The protein resides in the cytoplasm. The protein localises to the rough endoplasmic reticulum membrane. Its subcellular location is the cytoplasmic granule. It is found in the P-body. Functionally, endoribonuclease involved in various biological functions such as cellular inflammatory response and immune homeostasis, glial differentiation of neuroprogenitor cells, cell death of cardiomyocytes, adipogenesis and angiogenesis. Functions as an endoribonuclease involved in mRNA decay. Modulates the inflammatory response by promoting the degradation of a set of translationally active cytokine-induced inflammation-related mRNAs, such as IL6 and IL12B, during the early phase of inflammation. Prevents aberrant T-cell-mediated immune reaction by degradation of multiple mRNAs controlling T-cell activation, such as those encoding cytokines (IL6 and IL2), cell surface receptors (ICOS, TNFRSF4 and TNFR2) and transcription factor (REL). Inhibits cooperatively with ZC3H12A the differentiation of helper T cells Th17 in lungs. They repress target mRNA encoding the Th17 cell-promoting factors IL6, ICOS, REL, IRF4, NFKBID and NFKBIZ. The cooperation requires RNA-binding by RC3H1 and the nuclease activity of ZC3H12A. Together with RC3H1, destabilizes TNFRSF4/OX40 mRNA by binding to the conserved stem loop structure in its 3'UTR. Self regulates by destabilizing its own mRNA. Cleaves mRNA harboring a stem-loop (SL), often located in their 3'-UTRs, during the early phase of inflammation in a helicase UPF1-dependent manner. Plays a role in the inhibition of microRNAs (miRNAs) biogenesis. Cleaves the terminal loop of a set of precursor miRNAs (pre-miRNAs) important for the regulation of the inflammatory response leading to their degradation, and thus preventing the biosynthesis of mature miRNAs. Also plays a role in promoting angiogenesis in response to inflammatory cytokines by inhibiting the production of antiangiogenic microRNAs via its anti-dicer RNase activity. Affects the overall ubiquitination of cellular proteins. Positively regulates deubiquitinase activity promoting the cleavage at 'Lys-48'- and 'Lys-63'-linked polyubiquitin chains on TNF receptor-associated factors (TRAFs), preventing JNK and NF-kappa-B signaling pathway activation, and hence negatively regulating macrophage-mediated inflammatory response and immune homeostasis. Induces also deubiquitination of the transcription factor HIF1A, probably leading to its stabilization and nuclear import, thereby positively regulating the expression of proangiogenic HIF1A-targeted genes. Involved in a TANK-dependent negative feedback response to attenuate NF-kappaB activation through the deubiquitination of IKBKG or TRAF6 in response to interleukin-1-beta (IL1B) stimulation or upon DNA damage. Prevents stress granules (SGs) formation and promotes macrophage apoptosis under stress conditions, including arsenite-induced oxidative stress, heat shock, and energy deprivation. Plays a role in the regulation of macrophage polarization; promotes IL4-induced polarization of macrophages M1 into anti-inflammatory M2 state. May also act as a transcription factor that regulates the expression of multiple genes involved in inflammatory response, angiogenesis, adipogenesis and apoptosis. Functions as a positive regulator of glial differentiation of neuroprogenitor cells through an amyloid precursor protein (APP)-dependent signaling pathway. Attenuates septic myocardial contractile dysfunction in response to lipopolysaccharide (LPS) by reducing I-kappa-B-kinase (IKK)-mediated NF-kappa-B activation, and hence myocardial pro-inflammatory cytokine production. The polypeptide is Endoribonuclease ZC3H12A (Mus musculus (Mouse)).